The following is a 777-amino-acid chain: Proton-coupled zinc antiporter SLC30A5 (777 aa).

At 1–28 (MEEKYSSNVMSSGRLGPVDAPESRLTRY) the chain is on the cytoplasmic side. A helical transmembrane segment spans residues 29 to 49 (IVLLCFTKFLKALGIFESYDL). At 50–52 (LKV) the chain is on the lumenal side. A helical membrane pass occupies residues 53–73 (VHIVQFIFILKLGSTCFMVLF). Residues 74–94 (QKPFSSGKSITKRQWVSIVKH) are Cytoplasmic-facing. The helical transmembrane segment at 95–115 (AFVSCIISLLWFFGLTLCGPL) threads the bilayer. The Lumenal portion of the chain corresponds to 116-117 (RT). The chain crosses the membrane as a helical span at residues 118–138 (LLLFEHSDIVVISLLTVLFTG). Residues 139–148 (SGGGPSKTRG) lie on the Cytoplasmic side of the membrane. The helical transmembrane segment at 149-169 (AAFFIIAVICLLLFDNDDLMA) threads the bilayer. Residues 170-189 (KIAEHPEGHHDSALTHFLYR) lie on the Lumenal side of the membrane. The helical transmembrane segment at 190–210 (AFFLLGVADHKGGVLLLVLAL) threads the bilayer. The Cytoplasmic portion of the chain corresponds to 211–234 (CFNVGFHTASRKLSLDIGGAKRLQ). The helical transmembrane segment at 235 to 255 (ALSHLVSVIILSPWVIILSAT) threads the bilayer. Residues 256–263 (TESKIESW) are Lumenal-facing. A helical transmembrane segment spans residues 264-284 (SALIMPFMTVIFSVMIMDFYV). The Cytoplasmic segment spans residues 285–299 (ESVCSVKMEPSKCAR). Residues 300–320 (YGSFLIFASALLLGNFWTHPI) traverse the membrane as a helical segment. The Lumenal segment spans residues 321 to 338 (TDQLRAMNKPAHQLHTEH). The helical transmembrane segment at 339 to 359 (VLSGGVVVSAIFFILSAQILA) threads the bilayer. Over 360–414 (SSSRKGQRGTLVGYSPEGTPLYNFMGDALHNTSPSMPRFLKDSLKQILEEYDSRQ) the chain is Cytoplasmic. The chain crosses the membrane as a helical span at residues 415-435 (IFYFLCLNLAFTFVEIFYGVW). Over 436–444 (TNSLGLLSD) the chain is Lumenal. A helical membrane pass occupies residues 445–465 (GFHMLFDCSALVMGLIAALMT). Positions 447 and 451 each coordinate Zn(2+). The Cytoplasmic portion of the chain corresponds to 466-484 (RWKATRIFSYGYGRVEILS). The chain crosses the membrane as a helical span at residues 485-505 (GFINGLFLVVIAFFVFIEAVA). At 506 to 516 (RIYDPPDINTD) the chain is on the lumenal side. A helical membrane pass occupies residues 517–537 (MLTPVSVGGLIVNLVGICAFS). The tract at residues 538-586 (HAHSHGAARGGCPSHDHGHSHHGHGHSHGHNHGHSHSDHGHNHGHTHNH) is his-rich loop; required for zinc transport. Residues 538 to 604 (HAHSHGAARG…VGMNANMRGV (67 aa)) lie on the Cytoplasmic side of the membrane. The tract at residues 547–593 (GGCPSHDHGHSHHGHGHSHGHNHGHSHSDHGHNHGHTHNHGHSHGSA) is disordered. 2 stretches are compositionally biased toward basic residues: residues 555-571 (GHSHHGHGHSHGHNHGH) and 579-589 (NHGHTHNHGHS). The chain crosses the membrane as a helical span at residues 605 to 625 (FSHVLADTLGSVGVIVSTILI). Residues histidine 607 and aspartate 611 each coordinate Zn(2+). Residues 626–629 (RQFG) lie on the Lumenal side of the membrane. Residues 630 to 650 (WLIADPLCSLFIAVLIFGSVL) traverse the membrane as a helical segment. At 651–777 (PLLKDACQVI…KYYKDGTYIM (127 aa)) the chain is on the cytoplasmic side.

It belongs to the cation diffusion facilitator (CDF) transporter (TC 2.A.4) family. SLC30A subfamily. In terms of assembly, heterodimer with SLC30A6/ZNT6; form a functional zinc ion transmembrane transporter.

It is found in the golgi apparatus. Its subcellular location is the golgi stack membrane. The protein resides in the cytoplasmic vesicle. The protein localises to the COPII-coated vesicle membrane. It localises to the secretory vesicle membrane. It is found in the trans-Golgi network membrane. It carries out the reaction Zn(2+)(in) + 2 H(+)(out) = Zn(2+)(out) + 2 H(+)(in). In terms of biological role, together with SLC30A6 forms a functional proton-coupled zinc ion antiporter mediating zinc entry into the lumen of organelles along the secretory pathway. By contributing to zinc ion homeostasis within the early secretory pathway, regulates the activation and folding of enzymes like alkaline phosphatases and enzymes involved in phosphatidylinositol glycan anchor biosynthesis. The protein is Proton-coupled zinc antiporter SLC30A5 (slc30a5) of Xenopus tropicalis (Western clawed frog).